A 179-amino-acid polypeptide reads, in one-letter code: MRQLLLTLSLISVSASDATVKCDDLDPNQYLCKNYAVDTITQQSVTCAADNSIQVMCETAEHIKCVGKDQFGIFNRTVPSACHYGAHVSYTTTVLLSIFLGFFGIDRIYLGYYALGLIKMFSLGGLFVFWLVDIILISLQLLGPADGTAYAMAYYGPKAQMIRFDSHTNFSFYTCDGCL.

The first 18 residues, 1 to 18 (MRQLLLTLSLISVSASDA), serve as a signal peptide directing secretion. Topologically, residues 19–82 (TVKCDDLDPN…IFNRTVPSAC (64 aa)) are extracellular. A glycan (N-linked (GlcNAc...) asparagine) is linked at asparagine 75. The chain crosses the membrane as a helical span at residues 83–105 (HYGAHVSYTTTVLLSIFLGFFGI). A TM2 domain is found at 88-135 (VSYTTTVLLSIFLGFFGIDRIYLGYYALGLIKMFSLGGLFVFWLVDII). At 106–109 (DRIY) the chain is on the cytoplasmic side. A helical membrane pass occupies residues 110-132 (LGYYALGLIKMFSLGGLFVFWLV). The Extracellular segment spans residues 133–179 (DIILISLQLLGPADGTAYAMAYYGPKAQMIRFDSHTNFSFYTCDGCL). A glycan (N-linked (GlcNAc...) asparagine) is linked at asparagine 169.

This sequence belongs to the TM2 family.

The protein resides in the membrane. In Caenorhabditis elegans, this protein is TM2 domain-containing protein Y66D12A.21.